The following is a 545-amino-acid chain: Putative serine/threonine-protein kinase L673 (545 aa).

Residues 13-125 (RLGLVNWMLN…YKVYYLTIWK (113 aa)) form the Cyclin N-terminal domain. A Protein kinase domain is found at 264 to 543 (IDFQNKLGSG…NCLKKIKESF (280 aa)). Residues 270–278 (LGSGTYGSV) and lysine 291 each bind ATP. The active-site Proton acceptor is the aspartate 384.

The protein belongs to the protein kinase superfamily. Ser/Thr protein kinase family.

The catalysed reaction is L-seryl-[protein] + ATP = O-phospho-L-seryl-[protein] + ADP + H(+). It catalyses the reaction L-threonyl-[protein] + ATP = O-phospho-L-threonyl-[protein] + ADP + H(+). The chain is Putative serine/threonine-protein kinase L673 from Acanthamoeba polyphaga (Amoeba).